A 347-amino-acid polypeptide reads, in one-letter code: E3 ubiquitin-protein ligase ARK2C (347 aa).

Disordered regions lie at residues 23 to 79 (PFQR…GTLH) and 268 to 289 (PHKY…GEES). A ubiquitin binding region spans residues 267–269 (FPH). Over residues 276 to 285 (PQDSKGKKDE) the composition is skewed to basic and acidic residues. The Zn(2+) site is built by cysteine 295 and cysteine 298. The RING-type; atypical zinc-finger motif lies at 295–336 (CTICLSMLEDGEDVRRLPCMHLFHQLCVDQWLAMSKKCPICR). Residues 310–314 (RLPCM) form a ubiquitin binding region. Residues histidine 318 and cysteine 321 each contribute to the Zn(2+) site.

Belongs to the Arkadia family. In terms of assembly, monomer; binding to the ubiquitin-conjugating enzyme E2 does not trigger homodimerization. In terms of tissue distribution, expressed in neurons of the nervous system.

It localises to the nucleus. The enzyme catalyses S-ubiquitinyl-[E2 ubiquitin-conjugating enzyme]-L-cysteine + [acceptor protein]-L-lysine = [E2 ubiquitin-conjugating enzyme]-L-cysteine + N(6)-ubiquitinyl-[acceptor protein]-L-lysine.. With respect to regulation, binds free ubiquitin non-covalently via its RING-type zinc finger. Ubiquitin-binding leads to enhance the E3 ubiquitin-protein ligase activity by stabilizing the ubiquitin-conjugating enzyme E2 (donor ubiquitin) in the 'closed' conformation and activating ubiquitin transfer. E3 ubiquitin-protein ligase that acts as a regulator of motor axon elongation. Required for efficient motor axon extension in the dorsal forelimb by enhancing the transcriptional responses of the SMAD1/SMAD5/SMAD8 effectors, which are activated downstream of BMP. Acts by mediating ubiquitination and degradation of SMAD inhibitors such as SMAD6, SMAD7, SKI and SNON isoform of SKIL. The sequence is that of E3 ubiquitin-protein ligase ARK2C from Mus musculus (Mouse).